A 1004-amino-acid polypeptide reads, in one-letter code: Zinc finger protein 316 (1004 aa).

A disordered region spans residues 1–148 (MAALHTTPDS…EEEEDEDEDD (148 aa)). A2 carries the N-acetylalanine modification. T7 carries the post-translational modification Phosphothreonine. S10 carries the phosphoserine modification. The span at 21 to 60 (GSECDPDQEEEEEEEEKGEEVQEVEEEEEEIVVEEEEEGV) shows a compositional bias: acidic residues. Over residues 61-72 (AEVVQDAQVEAV) the composition is skewed to low complexity. Residues 73–95 (AEVEVEADVEEEDVKEVLAEEEC) are compositionally biased toward acidic residues. Position 112 is a phosphoserine (S112). Positions 132-148 (EDLEEEEEEEEDEDEDD) are enriched in acidic residues. The KRAB domain occupies 158 to 229 (VTFEDVAVYF…DSPRPEEGDI (72 aa)). 5 C2H2-type zinc fingers span residues 345 to 367 (TTCD…QRYH), 373 to 395 (FGCE…QRTH), 401 to 423 (FPCP…RRIH), 429 to 451 (YRCA…QRTH), and 457 to 479 (YPCS…QAVH). A C2H2-type 6; degenerate zinc finger spans residues 485–512 (HCCPDCGQAFRLRADFQRHRRGGGCAEA). Residues 508-574 (GCAEAGGDGP…TPSGKVDPAP (67 aa)) form a disordered region. Residues 531–557 (EDTDPGPEGSEVGEADGEAEAAAEERE) show a composition bias toward acidic residues. 5 consecutive C2H2-type zinc fingers follow at residues 691-713 (WICS…QRYH), 719-741 (HRCA…RRTH), 747-769 (FPCP…VRGH), 775-797 (FVCG…GRAH), and 803-825 (YACG…QWAH). K829 participates in a covalent cross-link: Glycyl lysine isopeptide (Lys-Gly) (interchain with G-Cter in SUMO2). C2H2-type zinc fingers lie at residues 831–853 (HRCP…RRTH), 859–881 (FRCA…RRGH), 887–909 (FPCP…QRTH), and 915–937 (YACA…MKTH). The disordered stretch occupies residues 936 to 976 (THRGATAAPGSGSAPAPAPKPEAAAKGPSSAGPGERGSALL). Low complexity predominate over residues 939–968 (GATAAPGSGSAPAPAPKPEAAAKGPSSAGP). K955 is covalently cross-linked (Glycyl lysine isopeptide (Lys-Gly) (interchain with G-Cter in SUMO2)).

Belongs to the krueppel C2H2-type zinc-finger protein family.

The protein localises to the nucleus. In terms of biological role, may be involved in transcriptional regulation. In Homo sapiens (Human), this protein is Zinc finger protein 316 (ZNF316).